Consider the following 314-residue polypeptide: uncharacterized protein (314 aa).

Over residues 68-91 the composition is skewed to basic and acidic residues; sequence EKKKKSSSFEKRDKRRVQLKEKSP. 2 disordered regions span residues 68-97 and 141-164; these read EKKKKSSSFEKRDKRRVQLKEKSPLRTPRN and MDVQSPSTMSTSKNNVRNAERPAS. Residues 144-157 show a composition bias toward polar residues; it reads QSPSTMSTSKNNVR.

The protein resides in the mitochondrion. This is an uncharacterized protein from Schizosaccharomyces pombe (strain 972 / ATCC 24843) (Fission yeast).